The sequence spans 388 residues: Succinate--CoA ligase [ADP-forming] subunit beta (388 aa).

In terms of domain architecture, ATP-grasp spans 9-244; sequence KQLFARYGMP…PSQEDAREAH (236 aa). Residues Lys-46, 53–55, Glu-99, Thr-102, and Glu-107 each bind ATP; that span reads GRG. The Mg(2+) site is built by Asn-199 and Asp-213. Residues Asn-264 and 321 to 323 each bind substrate; that span reads GIV.

This sequence belongs to the succinate/malate CoA ligase beta subunit family. Heterotetramer of two alpha and two beta subunits. Mg(2+) serves as cofactor.

It carries out the reaction succinate + ATP + CoA = succinyl-CoA + ADP + phosphate. The enzyme catalyses GTP + succinate + CoA = succinyl-CoA + GDP + phosphate. The protein operates within carbohydrate metabolism; tricarboxylic acid cycle; succinate from succinyl-CoA (ligase route): step 1/1. Functionally, succinyl-CoA synthetase functions in the citric acid cycle (TCA), coupling the hydrolysis of succinyl-CoA to the synthesis of either ATP or GTP and thus represents the only step of substrate-level phosphorylation in the TCA. The beta subunit provides nucleotide specificity of the enzyme and binds the substrate succinate, while the binding sites for coenzyme A and phosphate are found in the alpha subunit. This chain is Succinate--CoA ligase [ADP-forming] subunit beta, found in Yersinia pseudotuberculosis serotype O:1b (strain IP 31758).